A 184-amino-acid chain; its full sequence is Guanylate kinase (184 aa).

Residues 5–183 (KKLIIITGPS…TVKEVLKIIK (179 aa)) form the Guanylate kinase-like domain. 12–19 (GPSGVGKG) provides a ligand contact to ATP.

The protein belongs to the guanylate kinase family.

The protein resides in the cytoplasm. The catalysed reaction is GMP + ATP = GDP + ADP. Essential for recycling GMP and indirectly, cGMP. The polypeptide is Guanylate kinase (Prochlorococcus marinus subsp. pastoris (strain CCMP1986 / NIES-2087 / MED4)).